The following is a 371-amino-acid chain: Cytochrome b (371 aa).

The next 4 helical transmembrane spans lie at 25–45 (FGSL…FLAI), 69–90 (WIMQ…YTHI), 105–125 (WLSG…GYVL), and 170–190 (FFAL…IHII). Residues H75 and H89 each coordinate heme b. Heme b is bound by residues H174 and H188. A ubiquinone is bound at residue H193. Helical transmembrane passes span 218 to 238 (YKDM…MTFA), 280 to 300 (LGGT…PFTH), 312 to 332 (LTQI…WTAT), and 339 to 358 (FIYI…IMNP).

It belongs to the cytochrome b family. As to quaternary structure, the cytochrome bc1 complex contains 3 respiratory subunits (MT-CYB, CYC1 and UQCRFS1), 2 core proteins (UQCRC1 and UQCRC2) and probably 6 low-molecular weight proteins. The cofactor is heme b.

Its subcellular location is the mitochondrion inner membrane. Functionally, component of the ubiquinol-cytochrome c reductase complex (complex III or cytochrome b-c1 complex) that is part of the mitochondrial respiratory chain. The b-c1 complex mediates electron transfer from ubiquinol to cytochrome c. Contributes to the generation of a proton gradient across the mitochondrial membrane that is then used for ATP synthesis. This is Cytochrome b (MT-CYB) from Micruroides euryxanthus (Sonoran coral snake).